The chain runs to 450 residues: Tryptophan dimethylallyltransferase 2 (450 aa).

Residues 80–81 (IL) and Glu-89 each bind L-tryptophan. Substrate is bound by residues Arg-100, Lys-186, and Tyr-188. Positions 190 and 251 each coordinate L-tryptophan. Residues Arg-264, Lys-266, Tyr-268, Gln-350, Tyr-352, Tyr-416, and Tyr-420 each contribute to the substrate site.

The protein belongs to the tryptophan dimethylallyltransferase family. Homodimer.

It carries out the reaction L-tryptophan + dimethylallyl diphosphate = 4-(3-methylbut-2-enyl)-L-tryptophan + diphosphate. It functions in the pathway alkaloid biosynthesis; ergot alkaloid biosynthesis. In terms of biological role, catalyzes the first step of ergot alkaloid biosynthesis. Ergot alkaloids, which are produced by endophyte fungi, can enhance plant host fitness, but also cause livestock toxicosis to host plants. The polypeptide is Tryptophan dimethylallyltransferase 2 (dmaW2) (Epichloe coenophiala (Tall fescue endophyte fungus)).